Reading from the N-terminus, the 770-residue chain is MSARSAYLCQIQICNGFLIAAGLLAVGLAGSQFSKVGLDNYRDIDFRLLNFIHVVTGCIGFYSLWRNHGSIVTKSLYLVSFVIGFATAVFYGFTTYRVVKAGENLNQLQSADGFNEEFQSENSNYAGRIVISALMIASGAVASLFSLFAIFLLSKIIVVTIPVYPLQSREQELAMSSAKKTLASIGLIKFILAFGILGLCVFIEYEHENVAGQDKYIKIGLDHISAMLCIVSGAMDIWATKGKNQQNLNLKVALAVAVVAATWCLKTVDNNAMPFYKNDLKFYYQGREVGDPSITSTDAPRYILVVAHGVLLGCFGIAFFLSTLSAVIVGTYLHLDFHSMHTEVNKSIKIQTGVLNVLHVFWGACMLALCILGLLDTWWRGEFLGADLLWVSVLFMTTGLMTSNNYSVMITTKFILSVVCLGISVEKMCASANLIYQMAAYPAYRNGNDRTFVAQIILYSIQAGIYLLEALTSLAGSYLYGTELRKQPNLTYRHSNGVHGLFSLGTLFYAVVITGTYIVFELGKWRYNEIPIEVPFFRLGNGPLAGAVFIVQFLCIPFPSLLASASILNIIIASISLFTVSSAITNVYYLQRYLQASDLLPTTETQQTIYQVAIILAAGAALACVICTVCAIICSLRSSYILHHRSTSPDSTVVAPLGEEQFGSGTLRVGTHMRTPSRPFHPQQSPAGGGVQPMEEQSVYWSADENPFYYHTSKRFYGKPYQIESGFYGYALAGSGSGQPGQSPANVGDDPNRMVQSSASQTQIGHVFNN.

Residues 736-770 (GSGQPGQSPANVGDDPNRMVQSSASQTQIGHVFNN) form a disordered region. The span at 754-770 (MVQSSASQTQIGHVFNN) shows a compositional bias: polar residues.

This is an uncharacterized protein from Caenorhabditis elegans.